The primary structure comprises 617 residues: Protein AsmA (617 aa).

The Cytoplasmic portion of the chain corresponds to 1–3; it reads MRR. The helical transmembrane segment at 4–24 threads the bilayer; sequence FLTTLMILLVVLVAGLSALVL. At 25–617 the chain is on the periplasmic side; sequence LVNPNDFRDY…KDVKKLLEKM (593 aa). A compositionally biased stretch (polar residues) spans 302 to 319; the sequence is TANGENGAAQQGQSQSTL. A disordered region spans residues 302 to 321; that stretch reads TANGENGAAQQGQSQSTLPR.

This sequence belongs to the AsmA family.

It localises to the cell inner membrane. Functionally, could be involved in the assembly of outer membrane proteins. May indirectly influence the assembly of outer membrane proteins, potentially by altering outer membrane fluidity. Inhibits the assembly of mutant forms of outer membrane protein F (OmpF). The protein is Protein AsmA of Escherichia coli (strain K12).